We begin with the raw amino-acid sequence, 443 residues long: MHLIAVSINHRTADVALREKVAFKDDAIRSANVDLYETKSILENVILSTCNRTEVYAVADQIHTGRYYIQRFLARSFGLDVEDIKNMTEVKVGDEAVKHLLQVTSGLDSVVLGETQILGQIRNAFFLAQEEDTTGTIFNHLFKQAITFAKKAHNETDIADNAVSVSYAAVELSKKVFGKVNNKQALIIGAGDMSELSLLNLIGSGVTDITIVNRTLSKAQDLAMKHHVKFEPMESLPRLLVDVDIVISSTSSENYIVTNEMLQSISTERKHDSLVMIDIAVPRDIEPNIDTIHDMFSYDVDDLKGLVDANLRERQLAAEQIIQNIPNEIEAHNEWVNMLGVVPVIRALREKAMSIQEDTMDSIDRKLPGLSERERKIISKHTKSIINQMLKDPIKQAKELSSDKKSNEKLELFQSIFDIEAENAYEAKKQKNNMKTGQILSFE.

Residues 49-52 (TCNR), Ser-109, 114-116 (ETQ), and Gln-120 contribute to the substrate site. Cys-50 serves as the catalytic Nucleophile. Residue 189 to 194 (GAGDMS) coordinates NADP(+).

Belongs to the glutamyl-tRNA reductase family. In terms of assembly, homodimer.

It carries out the reaction (S)-4-amino-5-oxopentanoate + tRNA(Glu) + NADP(+) = L-glutamyl-tRNA(Glu) + NADPH + H(+). Its pathway is porphyrin-containing compound metabolism; protoporphyrin-IX biosynthesis; 5-aminolevulinate from L-glutamyl-tRNA(Glu): step 1/2. Catalyzes the NADPH-dependent reduction of glutamyl-tRNA(Glu) to glutamate 1-semialdehyde (GSA). The polypeptide is Glutamyl-tRNA reductase (Staphylococcus saprophyticus subsp. saprophyticus (strain ATCC 15305 / DSM 20229 / NCIMB 8711 / NCTC 7292 / S-41)).